The chain runs to 331 residues: Aspartate carbamoyltransferase catalytic subunit (331 aa).

The carbamoyl phosphate site is built by Arg76 and Thr77. Lys104 contacts L-aspartate. Carbamoyl phosphate is bound by residues Arg126, His154, and Gln157. L-aspartate-binding residues include Arg187 and Arg246. Carbamoyl phosphate contacts are provided by Gly287 and Pro288.

This sequence belongs to the aspartate/ornithine carbamoyltransferase superfamily. ATCase family. Heterododecamer (2C3:3R2) of six catalytic PyrB chains organized as two trimers (C3), and six regulatory PyrI chains organized as three dimers (R2).

It catalyses the reaction carbamoyl phosphate + L-aspartate = N-carbamoyl-L-aspartate + phosphate + H(+). Its pathway is pyrimidine metabolism; UMP biosynthesis via de novo pathway; (S)-dihydroorotate from bicarbonate: step 2/3. In terms of biological role, catalyzes the condensation of carbamoyl phosphate and aspartate to form carbamoyl aspartate and inorganic phosphate, the committed step in the de novo pyrimidine nucleotide biosynthesis pathway. The polypeptide is Aspartate carbamoyltransferase catalytic subunit (Dehalococcoides mccartyi (strain CBDB1)).